The following is a 434-amino-acid chain: Glutamate-1-semialdehyde 2,1-aminomutase 2 (434 aa).

Position 270 is an N6-(pyridoxal phosphate)lysine (Lys-270).

Belongs to the class-III pyridoxal-phosphate-dependent aminotransferase family. HemL subfamily. In terms of assembly, homodimer. It depends on pyridoxal 5'-phosphate as a cofactor.

The protein localises to the cytoplasm. The catalysed reaction is (S)-4-amino-5-oxopentanoate = 5-aminolevulinate. Its pathway is porphyrin-containing compound metabolism; protoporphyrin-IX biosynthesis; 5-aminolevulinate from L-glutamyl-tRNA(Glu): step 2/2. The chain is Glutamate-1-semialdehyde 2,1-aminomutase 2 from Bacillus cereus (strain G9842).